Consider the following 572-residue polypeptide: Glypican-5 (572 aa).

An N-terminal signal peptide occupies residues M1 to S24. 2 N-linked (GlcNAc...) asparagine glycosylation sites follow: N120 and N237. Residue S486 is glycosylated (O-linked (Xyl...) (glycosaminoglycan) serine). Residue N493 is glycosylated (N-linked (GlcNAc...) asparagine). Residues S495, S507, and S509 are each glycosylated (O-linked (Xyl...) (glycosaminoglycan) serine). The N-linked (GlcNAc...) asparagine glycan is linked to N527.

The protein belongs to the glypican family.

Its subcellular location is the cell membrane. It is found in the secreted. The protein localises to the extracellular space. Its function is as follows. Cell surface proteoglycan that bears heparan sulfate. The protein is Glypican-5 (Gpc5) of Mus musculus (Mouse).